Consider the following 239-residue polypeptide: Large ribosomal subunit protein uL1 (239 aa).

This sequence belongs to the universal ribosomal protein uL1 family. Part of the 50S ribosomal subunit.

Binds directly to 23S rRNA. The L1 stalk is quite mobile in the ribosome, and is involved in E site tRNA release. In terms of biological role, protein L1 is also a translational repressor protein, it controls the translation of the L11 operon by binding to its mRNA. The sequence is that of Large ribosomal subunit protein uL1 from Rickettsia conorii (strain ATCC VR-613 / Malish 7).